The sequence spans 356 residues: UDP-N-acetylglucosamine--N-acetylmuramyl-(pentapeptide) pyrophosphoryl-undecaprenol N-acetylglucosamine transferase (356 aa).

UDP-N-acetyl-alpha-D-glucosamine contacts are provided by residues 11 to 13 (TGG), N122, S186, and Q287.

This sequence belongs to the glycosyltransferase 28 family. MurG subfamily.

It localises to the cell inner membrane. The catalysed reaction is di-trans,octa-cis-undecaprenyl diphospho-N-acetyl-alpha-D-muramoyl-L-alanyl-D-glutamyl-meso-2,6-diaminopimeloyl-D-alanyl-D-alanine + UDP-N-acetyl-alpha-D-glucosamine = di-trans,octa-cis-undecaprenyl diphospho-[N-acetyl-alpha-D-glucosaminyl-(1-&gt;4)]-N-acetyl-alpha-D-muramoyl-L-alanyl-D-glutamyl-meso-2,6-diaminopimeloyl-D-alanyl-D-alanine + UDP + H(+). The protein operates within cell wall biogenesis; peptidoglycan biosynthesis. In terms of biological role, cell wall formation. Catalyzes the transfer of a GlcNAc subunit on undecaprenyl-pyrophosphoryl-MurNAc-pentapeptide (lipid intermediate I) to form undecaprenyl-pyrophosphoryl-MurNAc-(pentapeptide)GlcNAc (lipid intermediate II). The protein is UDP-N-acetylglucosamine--N-acetylmuramyl-(pentapeptide) pyrophosphoryl-undecaprenol N-acetylglucosamine transferase of Anaplasma marginale (strain St. Maries).